The following is a 185-amino-acid chain: Coordinator of PRMT5 and differentiation stimulator (185 aa).

M1 is subject to N-acetylmethionine. Residues 1-109 (MDPPTAGAQS…MSGCLPKEQA (109 aa)) form a disordered region. 2 stretches are compositionally biased toward basic and acidic residues: residues 42 to 52 (SSQEKATENAT) and 66 to 77 (SPAHGEGTHCEE). The residue at position 66 (S66) is a Phosphoserine. Residues 78–89 (EGFAEDDEDSDG) are compositionally biased toward acidic residues.

Interacts with PRMT5. Interacts with histone H4; specifically interacts with the N-terminus of histone H4 but not with histone H3. Interacts with CBFB. Found in a complex with PRMT5, RUNX1 and CBFB.

Its subcellular location is the nucleus. Its function is as follows. Histone-binding protein required for histone H4 methyltransferase activity of PRMT5. Specifically required for histone H4 'Arg-3' methylation mediated by PRMT5, but not histone H3 'Arg-8' methylation, suggesting that it modulates the substrate specificity of PRMT5. Specifically interacts with the N-terminus of histone H4 but not with histone H3, suggesting that it acts by promoting the association between histone H4 and PRMT5. Involved in CCNE1 promoter repression. Plays a role in muscle cell differentiation by modulating the recruitment of PRMT5 to the promoter of genes involved in the coordination between cell cycle exit and muscle differentiation. In Bos taurus (Bovine), this protein is Coordinator of PRMT5 and differentiation stimulator (COPRS).